A 518-amino-acid chain; its full sequence is Glutamate--cysteine ligase (518 aa).

Belongs to the glutamate--cysteine ligase type 1 family. Type 1 subfamily.

It catalyses the reaction L-cysteine + L-glutamate + ATP = gamma-L-glutamyl-L-cysteine + ADP + phosphate + H(+). It participates in sulfur metabolism; glutathione biosynthesis; glutathione from L-cysteine and L-glutamate: step 1/2. This is Glutamate--cysteine ligase from Salmonella paratyphi C (strain RKS4594).